The following is a 103-amino-acid chain: Large ribosomal subunit protein mL63 (103 aa).

The protein belongs to the mitochondrion-specific ribosomal protein mL63 family.

It localises to the mitochondrion. The polypeptide is Large ribosomal subunit protein mL63 (mrpl57) (Danio rerio (Zebrafish)).